The primary structure comprises 1046 residues: MASSVGNVADSTEPTKRMLSFQGLAELAHREYQAGDFEAAERHCMQLWRQEPDNTGVLLLLSSIHFQCRRLDRSAHFSTLAIKQNPLLAEAYSNLGNVYKERGQLQEAIEHYRHALRLKPDFIDGYINLAAALVAAGDMEGAVQAYVSALQYNPDLYCVRSDLGNLLKALGRLEEAKACYLKAIETQPNFAVAWSNLGCVFNAQGEIWLAIHHFEKAVTLDPNFLDAYINLGNVLKEARIFDRAVAAYLRALSLSPNHAVVHGNLACVYYEQGLIDLAIDTYRRAIELQPHFPDAYCNLANALKEKGSVAEAEDCYNTALRLCPTHADSLNNLANIKREQGNIEEAVRLYRKALEVFPEFAAAHSNLASVLQQQGKLQEALMHYKEAIRISPTFADAYSNMGNTLKEMQDVQGALQCYTRAIQINPAFADAHSNLASIHKDSGNIPEAIASYRTALKLKPDFPDAYCNLAHCLQIVCDWTDYDERMKKLVSIVADQLEKNRLPSVHPHHSMLYPLSHGFRKAIAERHGNLCLDKINVLHKPPYEHPKDLKLSDGRLRVGYVSSDFGNHPTSHLMQSIPGMHNPDKFEVFCYALSPDDGTNFRVKVMAEANHFIDLSQIPCNGKAADRIHQDGIHILVNMNGYTKGARNELFALRPAPIQAMWLGYPGTSGALFMDYIITDQETSPAEVAEQYSEKLAYMPHTFFIGDHANMFPHLKKKAVIDFKSNGHIYDNRIVLNGIDLKAFLDSLPDVKIVKMKCPDGGDNADSSNTALNMPVIPMNTIAEAVIEMINRGQIQITINGFSISNGLATTQINNKAATGEEVPRTIIVTTRSQYGLPEDAIVYCNFNQLYKIDPSTLQMWANILKRVPNSVLWLLRFPAVGEPNIQQYAQNMGLPQNRIIFSPVAPKEEHVRRGQLADVCLDTPLCNGHTTGMDVLWAGTPMVTMPGETLASRVAASQLTCLGCLELIAKNRQEYEDIAVKLGTDLEYLKKVRGKVWKQRISSPLFNTKQYTMELERLYLQMWEHYAAGNKPDHMIKPVEVTESA.

The residue at position 2 (alanine 2) is an N-acetylalanine. Phosphoserine; by GSK3-beta; alternate occurs at positions 3 and 4. O-linked (GlcNAc) serine; alternate glycans are attached at residues serine 3 and serine 4. Residue aspartate 10 is glycosylated (O-linked (GlcNAc) serine). Threonine 12 is a glycosylation site (O-linked (GlcNAc) threonine). An O-linked (GlcNAc) serine glycan is attached at methionine 18. Residue serine 20 is modified to Phosphoserine. Residues 21-54 form a TPR 1 repeat; it reads FQGLAELAHREYQAGDFEAAERHCMQLWRQEPDN. The O-linked (GlcNAc) threonine glycan is linked to glutamate 38. Residues proline 52 and glycine 56 are each glycosylated (O-linked (GlcNAc) serine). TPR repeat units lie at residues 89 to 122, 123 to 156, 157 to 190, 191 to 224, 225 to 258, 259 to 292, 293 to 326, 327 to 360, 361 to 394, 395 to 428, and 429 to 462; these read AEAYSNLGNVYKERGQLQEAIEHYRHALRLKPDF, IDGYINLAAALVAAGDMEGAVQAYVSALQYNPDL, YCVRSDLGNLLKALGRLEEAKACYLKAIETQPNF, AVAWSNLGCVFNAQGEIWLAIHHFEKAVTLDPNF, LDAYINLGNVLKEARIFDRAVAAYLRALSLSPNH, AVVHGNLACVYYEQGLIDLAIDTYRRAIELQPHF, PDAYCNLANALKEKGSVAEAEDCYNTALRLCPTH, ADSLNNLANIKREQGNIEEAVRLYRKALEVFPEF, AAAHSNLASVLQQQGKLQEALMHYKEAIRISPTF, ADAYSNMGNTLKEMQDVQGALQCYTRAIQINPAF, and ADAHSNLASIHKDSGNIPEAIASYRTALKLKPDF. A glycan (O-linked (GlcNAc) serine; by autocatalysis) is linked at serine 399. Threonine 454 is modified (phosphothreonine; by AMPK). A TPR 13; truncated repeat occupies 463–473; the sequence is PDAYCNLAHCL. A DFP motif motif is present at residues 464 to 466; sequence DAY. A Nuclear localization signal motif is present at residues 487-503; sequence KKLVSIVADQLEKNRLP. The active-site Proton acceptor is the histidine 508. UDP contacts are provided by residues glutamine 849, lysine 852, 906-908, 911-914, 930-932, and aspartate 935; these read APK, HVRR, and HTT. Tyrosine 989 bears the Phosphotyrosine mark. The required for phosphatidylinositol 3,4,5-triphosphate binding stretch occupies residues 991–1010; sequence KKVRGKVWKQRISSPLFNTK.

The protein belongs to the glycosyltransferase 41 family. O-GlcNAc transferase subfamily. In terms of assembly, monomer; may exist in different oligomerization states in cells. Homotrimer, oligomerizes via TPR repeats 6 and 7. Trimerization is not necessary for activity in vitro, however it increases affinity for UDP-GlcNAc. Component of a THAP1/THAP3-HCFC1-OGT complex. Component of the NSL complex at least composed of MOF/KAT8, KANSL1, KANSL2, KANSL3, MCRS1, PHF20, OGT1/OGT, WDR5 and HCFC1. Found in a complex with KIF5B, RHOT1, RHOT2 and TRAK1. Found in a complex composed of at least SINHCAF, SIN3A, HDAC1, SAP30, RBBP4, OGT and TET1. Component of a complex composed of KMT2E/MLL5 (isoform 3), OGT (isoform 1) and USP7; the complex stabilizes KMT2E/MLL5, preventing KMT2E/MLL5 ubiquitination and proteasomal-mediated degradation. Interacts (via TPRs 1-6) with SIN3A; the interaction mediates transcriptional repression in parallel with histone deacetylase. Interacts (via TPR 5-6) with TET1, TET2 and TET3. Interacts (via TPR repeats 6 and 7) with ATXN10. Interacts with NSD2. Interacts with PROSER1; this interaction mediates TET2 O-GlcNAcylation and stability by promoting the interaction between OGT and TET2. As to quaternary structure, interacts with USP7. (Microbial infection) Interacts with human T-cell leukemia virus 1/HTLV-1 protein Tax; this interaction increases Tax interacting partner CREB1 O-GlcNAcylation. In terms of processing, ubiquitinated by the SCF(FBXO31) complex, leading to its proteasomal degradation. Post-translationally, phosphorylation on Ser-3 or Ser-4 by GSK3-beta positively regulates its activity. Phosphorylation at Thr-454 by AMPK promotes nuclear localization. Glycosylated via autocatalysis; O-GlcNAcylation at Ser-399 promotes nuclear localization. In terms of processing, glycosylated via autocatalysis; does not affect the enzyme activity but regulates substrate selectivity. As to expression, highly expressed in pancreas and to a lesser extent in skeletal muscle, heart, brain and placenta. Present in trace amounts in lung and liver.

It is found in the nucleus. It localises to the cytoplasm. The protein localises to the mitochondrion. The protein resides in the membrane. Its subcellular location is the cell membrane. It is found in the mitochondrion membrane. It localises to the cell projection. It catalyses the reaction L-seryl-[protein] + UDP-N-acetyl-alpha-D-glucosamine = 3-O-(N-acetyl-beta-D-glucosaminyl)-L-seryl-[protein] + UDP + H(+). It carries out the reaction L-threonyl-[protein] + UDP-N-acetyl-alpha-D-glucosamine = 3-O-(N-acetyl-beta-D-glucosaminyl)-L-threonyl-[protein] + UDP + H(+). It participates in protein modification; protein glycosylation. With respect to regulation, subject to product inhibition by UDP. Functionally, catalyzes the transfer of a single N-acetylglucosamine from UDP-GlcNAc to a serine or threonine residue in cytoplasmic and nuclear proteins resulting in their modification with a beta-linked N-acetylglucosamine (O-GlcNAc). Glycosylates a large and diverse number of proteins including histone H2B, AKT1, AMPK, ATG4B, CAPRIN1, EZH2, FNIP1, GSDMD, KRT7, LMNA, LMNB1, LMNB2, RPTOR, HOXA1, PFKL, KMT2E/MLL5, MAPT/TAU, TET2, RBL2, RET, NOD2 and HCFC1. Can regulate their cellular processes via cross-talk between glycosylation and phosphorylation or by affecting proteolytic processing. Involved in insulin resistance in muscle and adipocyte cells via glycosylating insulin signaling components and inhibiting the 'Thr-308' phosphorylation of AKT1, enhancing IRS1 phosphorylation and attenuating insulin signaling. Involved in glycolysis regulation by mediating glycosylation of 6-phosphofructokinase PFKL, inhibiting its activity. Plays a key role in chromatin structure by mediating O-GlcNAcylation of 'Ser-112' of histone H2B: recruited to CpG-rich transcription start sites of active genes via its interaction with TET proteins (TET1, TET2 or TET3). As part of the NSL complex indirectly involved in acetylation of nucleosomal histone H4 on several lysine residues. O-GlcNAcylation of 'Ser-75' of EZH2 increases its stability, and facilitating the formation of H3K27me3 by the PRC2/EED-EZH2 complex. Stabilizes KMT2E/MLL5 by mediating its glycosylation, thereby preventing KMT2E/MLL5 ubiquitination. Regulates circadian oscillation of the clock genes and glucose homeostasis in the liver. Stabilizes clock proteins BMAL1 and CLOCK through O-glycosylation, which prevents their ubiquitination and subsequent degradation. Promotes the CLOCK-BMAL1-mediated transcription of genes in the negative loop of the circadian clock such as PER1/2 and CRY1/2. O-glycosylates HCFC1 and regulates its proteolytic processing and transcriptional activity. Component of a THAP1/THAP3-HCFC1-OGT complex that is required for the regulation of the transcriptional activity of RRM1. Regulates mitochondrial motility in neurons by mediating glycosylation of TRAK1. Promotes autophagy by mediating O-glycosylation of ATG4B. Acts as a regulator of mTORC1 signaling by mediating O-glycosylation of RPTOR and FNIP1: O-GlcNAcylation of RPTOR in response to glucose sufficiency promotes activation of the mTORC1 complex. In terms of biological role, the mitochondrial isoform (mOGT) is cytotoxic and triggers apoptosis in several cell types including INS1, an insulinoma cell line. Its function is as follows. Has N-acetylglucosaminyltransferase activity: glycosylates proteins, such as HNRNPU, NEUROD1, NUP62 and PDCD6IP. Displays specific substrate selectivity compared to other isoforms. The sequence is that of UDP-N-acetylglucosamine--peptide N-acetylglucosaminyltransferase 110 kDa subunit from Homo sapiens (Human).